The primary structure comprises 439 residues: Xylose isomerase (439 aa).

Catalysis depends on residues histidine 101 and aspartate 104. Mg(2+)-binding residues include glutamate 232, glutamate 268, histidine 271, aspartate 296, aspartate 307, aspartate 309, and aspartate 339.

Belongs to the xylose isomerase family. Homotetramer. Requires Mg(2+) as cofactor.

It localises to the cytoplasm. The catalysed reaction is alpha-D-xylose = alpha-D-xylulofuranose. This is Xylose isomerase from Histophilus somni (strain 2336) (Haemophilus somnus).